A 462-amino-acid chain; its full sequence is 23S rRNA (uracil(1939)-C(5))-methyltransferase RlmD (462 aa).

One can recognise a TRAM domain in the interval 6-76; sequence KSRKPQQPEY…KRLEEAEMVE (71 aa). [4Fe-4S] cluster-binding residues include Cys-90, Cys-96, Cys-99, and Cys-178. 6 residues coordinate S-adenosyl-L-methionine: Gln-287, Phe-316, Asn-321, Glu-340, Asp-367, and Asp-388. Cys-414 serves as the catalytic Nucleophile.

It belongs to the class I-like SAM-binding methyltransferase superfamily. RNA M5U methyltransferase family. RlmD subfamily.

The catalysed reaction is uridine(1939) in 23S rRNA + S-adenosyl-L-methionine = 5-methyluridine(1939) in 23S rRNA + S-adenosyl-L-homocysteine + H(+). In terms of biological role, catalyzes the formation of 5-methyl-uridine at position 1939 (m5U1939) in 23S rRNA. This chain is 23S rRNA (uracil(1939)-C(5))-methyltransferase RlmD, found in Acinetobacter baumannii (strain AB0057).